The following is a 190-amino-acid chain: Protein shisa-like-2A (190 aa).

A run of 2 helical transmembrane segments spans residues 48-68 (SFFP…LIGL) and 70-90 (VAAV…YLFI).

It belongs to the shisa family.

The protein resides in the membrane. This is Protein shisa-like-2A from Homo sapiens (Human).